Here is a 528-residue protein sequence, read N- to C-terminus: Protein MGF 505-7R (528 aa).

ANK repeat units follow at residues 54 to 83, 129 to 158, 261 to 290, 292 to 321, and 322 to 352; these read SIND…NLHY, GCDL…LLNV, SVKR…IPRG, IERL…YKVK, and NVKK…LLDA.

Belongs to the asfivirus MGF 505 family. In terms of assembly, interacts with host STING1. Interacts with host JAK1; this interaction leads to JAK1 degradation. Interacts with host JAK2; this interaction leads to JAK2 degradation. Interacts with host RELA; this interaction inhibits NF-kappa-B promoter activity.

The protein localises to the host cytoplasm. Its function is as follows. Plays a role in virus cell tropism, and may be required for efficient virus replication in macrophages. Interferes with host NF-kappa-B promoter activity mediated by TLR8. Mechanistically, inhibits the phosphorylation and subsequent nuclear translocation of host NF-kappa-B RELA subunit downstream of TLR8. Promotes the expression of the autophagy-related protein host ULK1 to degrade host STING and inhibit the interferon response. Inhibits also JAK1- and JAK2-mediated signaling and thus negatively regulates the IFN-gamma signaling. This is Protein MGF 505-7R from African swine fever virus (strain Badajoz 1971 Vero-adapted) (Ba71V).